The following is a 237-amino-acid chain: Probable transcriptional regulatory protein Fjoh_2560 (237 aa).

The protein belongs to the TACO1 family.

It is found in the cytoplasm. The sequence is that of Probable transcriptional regulatory protein Fjoh_2560 from Flavobacterium johnsoniae (strain ATCC 17061 / DSM 2064 / JCM 8514 / BCRC 14874 / CCUG 350202 / NBRC 14942 / NCIMB 11054 / UW101) (Cytophaga johnsonae).